The chain runs to 444 residues: Trigger factor (444 aa).

A PPIase FKBP-type domain is found at 160 to 245 (DMQVTFDFEG…VKQVEKPKLP (86 aa)).

This sequence belongs to the FKBP-type PPIase family. Tig subfamily.

It localises to the cytoplasm. It carries out the reaction [protein]-peptidylproline (omega=180) = [protein]-peptidylproline (omega=0). Involved in protein export. Acts as a chaperone by maintaining the newly synthesized protein in an open conformation. Functions as a peptidyl-prolyl cis-trans isomerase. This Acinetobacter baylyi (strain ATCC 33305 / BD413 / ADP1) protein is Trigger factor.